We begin with the raw amino-acid sequence, 447 residues long: Gamma-glutamyl phosphate reductase (447 aa).

This sequence belongs to the gamma-glutamyl phosphate reductase family.

Its subcellular location is the cytoplasm. The enzyme catalyses L-glutamate 5-semialdehyde + phosphate + NADP(+) = L-glutamyl 5-phosphate + NADPH + H(+). Its pathway is amino-acid biosynthesis; L-proline biosynthesis; L-glutamate 5-semialdehyde from L-glutamate: step 2/2. Its function is as follows. Catalyzes the NADPH-dependent reduction of L-glutamate 5-phosphate into L-glutamate 5-semialdehyde and phosphate. The product spontaneously undergoes cyclization to form 1-pyrroline-5-carboxylate. The polypeptide is Gamma-glutamyl phosphate reductase (Methanosarcina acetivorans (strain ATCC 35395 / DSM 2834 / JCM 12185 / C2A)).